Reading from the N-terminus, the 438-residue chain is sn-glycerol-3-phosphate-binding periplasmic protein UgpB (438 aa).

The signal sequence occupies residues 1 to 23 (MISLRHTALGLALSLAFTGQALA). The sn-glycerol 3-phosphate site is built by tyrosine 65, glutamate 89, serine 144, serine 270, glycine 307, tyrosine 346, and arginine 397.

The protein belongs to the bacterial solute-binding protein 1 family. In terms of assembly, the complex is composed of two ATP-binding proteins (UgpC), two transmembrane proteins (UgpA and UgpE) and a solute-binding protein (UgpB).

It localises to the periplasm. Part of the ABC transporter complex UgpBAEC involved in sn-glycerol-3-phosphate (G3P) import. Binds G3P. The chain is sn-glycerol-3-phosphate-binding periplasmic protein UgpB (ugpB) from Salmonella typhi.